The chain runs to 157 residues: SsrA-binding protein (157 aa).

This sequence belongs to the SmpB family.

It localises to the cytoplasm. Functionally, required for rescue of stalled ribosomes mediated by trans-translation. Binds to transfer-messenger RNA (tmRNA), required for stable association of tmRNA with ribosomes. tmRNA and SmpB together mimic tRNA shape, replacing the anticodon stem-loop with SmpB. tmRNA is encoded by the ssrA gene; the 2 termini fold to resemble tRNA(Ala) and it encodes a 'tag peptide', a short internal open reading frame. During trans-translation Ala-aminoacylated tmRNA acts like a tRNA, entering the A-site of stalled ribosomes, displacing the stalled mRNA. The ribosome then switches to translate the ORF on the tmRNA; the nascent peptide is terminated with the 'tag peptide' encoded by the tmRNA and targeted for degradation. The ribosome is freed to recommence translation, which seems to be the essential function of trans-translation. The polypeptide is SsrA-binding protein (Rhodococcus jostii (strain RHA1)).